The following is a 754-amino-acid chain: uncharacterized protein (754 aa).

Active-site charge relay system residues include Ser585 and His707. The tract at residues 733–754 (SHAPPPSRKARSAARRSTDPVR) is disordered.

It belongs to the peptidase S9A family.

This is an uncharacterized protein from Sinorhizobium fredii (strain NBRC 101917 / NGR234).